The primary structure comprises 1543 residues: Rho guanine nucleotide exchange factor 12 (1543 aa).

Positions 1 to 62 (MSGTQSTITD…KTKSSSEESR (62 aa)) are disordered. S2 is modified (N-acetylserine). The span at 28 to 45 (SPTDKKQKVERSSSHDFD) shows a compositional bias: basic and acidic residues. Residue S41 is modified to Phosphoserine. One can recognise a PDZ domain in the interval 72-151 (CVIIQKDDNG…LTVQGRPPGS (80 aa)). A coiled-coil region spans residues 194–262 (VGEENNVVHN…LSKATGSAQD (69 aa)). Residues 281 to 355 (AEADPGDGLC…GAPHIIGAED (75 aa)) are disordered. Residues 293–312 (DWSSGDASRPSSDSADSPKS) are compositionally biased toward low complexity. The residue at position 309 (S309) is a Phosphoserine. Basic and acidic residues predominate over residues 313–329 (SLRERSYLEEAPERSEG). Phosphoserine is present on S341. In terms of domain architecture, RGSL spans 367–558 (GQCSCFQSIE…LMYMKYLGVK (192 aa)). Residues 574–710 (FLPKIKQSMK…DSTPRVPTTV (137 aa)) form a disordered region. The span at 582–592 (MKKDREGEEKG) shows a compositional bias: basic and acidic residues. At S637 the chain carries Phosphoserine. A compositionally biased stretch (low complexity) spans 663–676 (ASSMSSATSGTALS). T736 carries the phosphothreonine modification. A DH domain is found at 787-977 (KRQEVINELF…RQILNYVNQA (191 aa)). Residues 981–1004 (AENKQRLEDYQRRLDTSNLKLSEY) are a coiled coil. The PH domain occupies 1019-1132 (KMIHEGPLVW…WQDLICRMAA (114 aa)). A disordered region spans residues 1137-1158 (QSTKPIPLPQPPPCEGDNDEEE). 3 positions are modified to phosphoserine: S1288, S1327, and S1377. Disordered regions lie at residues 1386–1405 (EAHS…KEEK) and 1441–1468 (PVTG…GPVS). Residues 1450-1460 (SSHQQQHSPQN) show a composition bias toward polar residues. Phosphoserine occurs at positions 1457 and 1540.

In terms of assembly, interacts with GNA12 and GNA13, probably through the RGS-like domain, with RHOA, PLXNB1 and PLXNB2, and through its PDZ domain with IGF1R beta subunit. Interacts with GCSAM. Found in a complex with ARHGEF11 and ARHGEF12; binding to ARHGEF11 and ARHGEF12 enhances CDC42 GEF activity of PLEKHG4B, and PLEKHG4B, in turn, inhibits ARHGEF11- and ARHGEF12-mediated RHOA activation. As to expression, expressed in brain, predominantly in neuronal cell bodies.

The protein resides in the cytoplasm. It localises to the membrane. May play a role in the regulation of RhoA GTPase by guanine nucleotide-binding alpha-12 (GNA12) and alpha-13 (GNA13). Acts as guanine nucleotide exchange factor (GEF) for RhoA GTPase and may act as GTPase-activating protein (GAP) for GNA12 and GNA13. This chain is Rho guanine nucleotide exchange factor 12 (Arhgef12), found in Mus musculus (Mouse).